We begin with the raw amino-acid sequence, 585 residues long: Glutathione S-transferase C-terminal domain-containing protein homolog (585 aa).

Positions 120-275 (LGFKGSCLLA…DKCARVLRDL (156 aa)) constitute a GST C-terminal domain.

This sequence belongs to the GSTCD family.

The chain is Glutathione S-transferase C-terminal domain-containing protein homolog from Drosophila melanogaster (Fruit fly).